A 516-amino-acid chain; its full sequence is Propionyl-CoA carboxylase, carboxyltransferase subunit (516 aa).

The segment at Met-1 to Lys-32 is disordered. The CoA carboxyltransferase N-terminal domain occupies Met-3–Glu-259. Positions Asp-263 to Lys-509 constitute a CoA carboxyltransferase C-terminal domain.

It belongs to the AccD/PCCB family. As to quaternary structure, the propionyl coenzyme A carboxylase (PCC) complex is composed of three subunits: PccA (biotin carboxylase and biotin-carboxyl carrier), PccB (carboxyltransferase) and PccX.

It carries out the reaction propanoyl-CoA + hydrogencarbonate + ATP = (S)-methylmalonyl-CoA + ADP + phosphate + H(+). Its pathway is metabolic intermediate metabolism; propanoyl-CoA degradation; succinyl-CoA from propanoyl-CoA: step 1/3. Its function is as follows. Part of the propionyl coenzyme A carboxylase (PCC) complex involved in propionate utilization and in the production of the poly(3-hydroxybutyrate-co-3-hydroxyvalerate)(PHBV), which is a water-insoluble biopolymer used as intracellular energy reserve material when cells grow under conditions of nutrient limitation. The complex catalyzes the carboxylation of propionyl-CoA to methylmalonyl-CoA. PCC is also able to catalyze the carboxylation of acetyl-CoA. This is Propionyl-CoA carboxylase, carboxyltransferase subunit from Haloferax mediterranei (strain ATCC 33500 / DSM 1411 / JCM 8866 / NBRC 14739 / NCIMB 2177 / R-4) (Halobacterium mediterranei).